We begin with the raw amino-acid sequence, 901 residues long: MutS protein homolog 5 (901 aa).

643–650 (GANASGKS) serves as a coordination point for ATP.

It belongs to the DNA mismatch repair MutS family. As to quaternary structure, heterooligomer of MSH4 and MSH5.

In terms of biological role, involved in meiotic recombination. Facilitate crossovers between homologs during meiosis. This chain is MutS protein homolog 5 (MSH5), found in Saccharomyces cerevisiae (strain ATCC 204508 / S288c) (Baker's yeast).